Here is a 410-residue protein sequence, read N- to C-terminus: Acyl-CoA-binding domain-containing protein 5-B (410 aa).

An ACB domain is found at A12 to V101. An acyl-CoA is bound by residues I23–Y32, Y43–K47, K69, and Y88. Residues V119 to E128 show a composition bias toward acidic residues. 3 disordered regions span residues V119–Y165, S221–V242, and G254–D320. A coiled-coil region spans residues T326–S355. Over S382–L404 the chain traverses the membrane.

The protein localises to the membrane. In terms of biological role, binds medium- and long-chain acyl-CoA esters. This is Acyl-CoA-binding domain-containing protein 5-B (acbd5b) from Danio rerio (Zebrafish).